The sequence spans 183 residues: Protein vem-1 (183 aa).

Residues 9–29 traverse the membrane as a helical segment; it reads FTMYDAVFLVVVLGFFFYWLT. The Cytochrome b5 heme-binding domain maps to 47-146; the sequence is MSDMTVEELR…FKYLTVGRLV (100 aa).

Belongs to the cytochrome b5 family. MAPR subfamily. Interacts with unc-40 (via cytoplasmic domain). As to expression, expressed in the AVG pioneer midline neuron and in several nerve ring neurons that extend projecting axons into the right ventral nerve cord.

The protein resides in the membrane. It is found in the cell projection. The protein localises to the axon. Transmembrane protein required for the axon guidance of a subset of ventral nerve cord-associated interneurons and motor neurons. May function with the netrin receptor unc-40 in axon guidance. This is Protein vem-1 from Caenorhabditis elegans.